The following is a 372-amino-acid chain: 3-galactosyl-N-acetylglucosaminide 4-alpha-L-fucosyltransferase FUT3 (372 aa).

The Cytoplasmic segment spans residues 1–15; it reads MDPLGAAKTQWPWRR. Residues 16-34 traverse the membrane as a helical; Signal-anchor for type II membrane protein segment; sequence CLAALLFQLLVAVCFFSYL. The Lumenal portion of the chain corresponds to 35–372; sequence RVSRDDATGS…MVRSIAAWFT (338 aa). The disordered stretch occupies residues 40 to 68; the sequence is DATGSPRPGLMAVEPVTGAPGGSSRQDTT. 2 N-linked (GlcNAc...) asparagine glycosylation sites follow: Asn-165 and Asn-196.

It belongs to the glycosyltransferase 10 family. Post-translationally, glycosylated.

The protein resides in the golgi apparatus. The protein localises to the golgi stack membrane. The enzyme catalyses a beta-D-galactosyl-(1-&gt;3)-N-acetyl-beta-D-glucosaminyl derivative + GDP-beta-L-fucose = a beta-D-galactosyl-(1-&gt;3)-[alpha-L-fucosyl-(1-&gt;4)]-N-acetyl-beta-D-glucosaminyl derivative + GDP + H(+). It catalyses the reaction an N-acetyl-alpha-neuraminyl-(2-&gt;3)-beta-D-galactosyl-(1-&gt;4)-N-acetyl-beta-D-glucosaminyl derivative + GDP-beta-L-fucose = an alpha-Neu5Ac-(2-&gt;3)-beta-D-Gal-(1-&gt;4)-[alpha-L-Fuc-(1-&gt;3)]-beta-D-GlcNAc derivative + GDP + H(+). The catalysed reaction is a beta-D-galactosyl-(1-&gt;4)-N-acetyl-beta-D-glucosaminyl derivative + GDP-beta-L-fucose = a beta-D-galactosyl-(1-&gt;4)-[alpha-L-fucosyl-(1-&gt;3)]-N-acetyl-beta-D-glucosaminyl derivative + GDP + H(+). It carries out the reaction an alpha-Neu5Ac-(2-&gt;3)-beta-D-Gal-(1-&gt;4)-beta-D-GlcNAc-(1-&gt;3)-beta-D-Gal-(1-&gt;4)-[alpha-L-Fuc-(1-&gt;3)]-beta-D-GlcNAc derivative + GDP-beta-L-fucose = an alpha-Neu5Ac-(2-&gt;3)-beta-D-Gal-(1-&gt;4)-[alpha-L-Fuc-(1-&gt;3)]-beta-D-GlcNAc-(1-&gt;3)-beta-D-Gal-(1-&gt;4)-[alpha-L-Fuc-(1-&gt;3)]-beta-D-GlcNAc derivative + GDP + H(+). The enzyme catalyses Lc4Cer + GDP-beta-L-fucose = a lactoside III(4)-a-Fuc-Lc4Cer + GDP + H(+). It catalyses the reaction a beta-D-Gal-(1-&gt;3)-beta-D-GlcNAc-(1-&gt;3)-beta-D-Gal-(1-&gt;4)-beta-D-Glc-(1&lt;-&gt;1')-Cer(d18:1(4E)) + GDP-beta-L-fucose = a III(4)-a-Fuc-Lc4Cer(d18:1(4E)) + GDP + H(+). The catalysed reaction is N-acetyl-alpha-neuraminosyl-(2-&gt;3)-beta-D-galactosyl-(1-&gt;3)-[N-acetyl-alpha-neuraminosyl-(2-&gt;6)]-N-acetyl-beta-D-glucosaminyl-(1-&gt;3)-beta-D-galactosyl-(1-&gt;4)-beta-D-glucosyl-(1&lt;-&gt;1')-N-acyl-sphing-4-enine + GDP-beta-L-fucose = N-acetyl-alpha-neuraminosyl-(2-&gt;3)-beta-D-galactosyl-(1-&gt;3)-alpha-L-fucosyl-(1-&gt;4)-[N-acetyl-alpha-neuraminosyl-(2-&gt;6)-N-acetyl-beta-D-glucosaminyl-(1-&gt;3)]-beta-D-galactosyl-(1-&gt;4)-beta-D-glucosyl-(1&lt;-&gt;1')-N-acyl-sphing-4-enine + GDP + H(+). It carries out the reaction N-acetyl-alpha-neuraminosyl-(2-&gt;3)-beta-D-galactosyl-(1-&gt;3)-N-acetyl-beta-D-glucosaminyl-(1-&gt;3)-beta-D-galactosyl-(1-&gt;4)-beta-D-glucosyl-(1&lt;-&gt;1')-N-acyl-sphing-4-enine + GDP-beta-L-fucose = N-acetyl-alpha-neuraminosyl-(2-&gt;3)-beta-D-galactosyl-(1-&gt;3)-alpha-L-fucosyl-(1-&gt;4)-[N-acetyl-beta-D-glucosaminyl-(1-&gt;3)]-beta-D-galactosyl-(1-&gt;4)-beta-D-glucosyl-(1&lt;-&gt;1')-N-acyl-sphing-4-enine + GDP + H(+). The enzyme catalyses beta-D-galactosyl-(1-&gt;3)-N-acetyl-D-glucosamine + GDP-beta-L-fucose = beta-D-galactosyl-(1-&gt;3)-[alpha-L-fucosyl-(1-&gt;4)]-N-acetyl-D-glucosamine + GDP + H(+). It catalyses the reaction alpha-L-Fuc-(1-&gt;2)-beta-D-Gal-(1-&gt;3)-D-GlcNAc + GDP-beta-L-fucose = alpha-L-Fuc-(1-&gt;2)-beta-D-Gal-(1-&gt;3)-[alpha-L-Fuc-(1-&gt;4)]-D-GlcNAc + GDP + H(+). The catalysed reaction is alpha-L-Fuc-(1-&gt;2)-beta-D-Gal-(1-&gt;4)-D-GlcNAc + GDP-beta-L-fucose = alpha-L-Fuc-(1-&gt;2)-beta-D-Gal-(1-&gt;4)-[alpha-L-Fuc-(1-&gt;3)]-D-GlcNAc + GDP + H(+). It carries out the reaction beta-D-galactosyl-(1-&gt;4)-N-acetyl-D-glucosamine + GDP-beta-L-fucose = beta-D-galactosyl-(1-&gt;4)-[alpha-L-fucosyl-(1-&gt;3)]-N-acetyl-D-glucosamine + GDP + H(+). The enzyme catalyses lactose + GDP-beta-L-fucose = beta-D-galactosyl-(1-&gt;4)-[alpha-L-fucosyl-(1-&gt;3)]-D-glucose + GDP + H(+). It catalyses the reaction an alpha-Neu5Ac-(2-&gt;3)-beta-D-Gal-(1-&gt;3)-D-GlcNAc derivative + GDP-beta-L-fucose = an alpha-Neu5Ac-(2-&gt;3)-beta-D-Gal-(1-&gt;3)-[alpha-L-Fuc-(1-&gt;4)]-beta-D-GlcNAc derivative + GDP + H(+). It participates in protein modification; protein glycosylation. Catalyzes the transfer of L-fucose, from a guanosine diphosphate-beta-L-fucose, to both the subterminal N-acetyl glucosamine (GlcNAc) of type 1 chain (beta-D-Gal-(1-&gt;3)-beta-D-GlcNAc) glycolipids and oligosaccharides via an alpha(1,4) linkage, and the subterminal glucose (Glc) or GlcNAc of type 2 chain (beta-D-Gal-(1-&gt;4)-beta-D-GlcNAc) oligosaccharides via an alpha(1,3) linkage, independently of the presence of terminal alpha-L-fucosyl-(1,2) moieties on the terminal galactose of these acceptors and participates in the blood groups Lewis determination and expression of Lewis a (Le(a)), lewis b (Le(b)), Lewis x/SSEA-1 (Le(x)) and lewis y (Le(y)) antigens. Also catalyzes the transfer of L-fucose to subterminal GlcNAc of sialyl- and disialyl-lactotetraosylceramide to produce sialyl Lewis a (sLe(a)) and disialyl Lewis a via an alpha(1,4) linkage and therefore may regulate cell surface sialyl Lewis a expression and consequently regulates adhesive properties to E-selectin, cell proliferation and migration. Catalyzes the transfer of an L-fucose to 3'-sialyl-N-acetyllactosamine by an alpha(1,3) linkage, which allows the formation of sialyl-Lewis x structure and therefore may regulate the sialyl-Lewis x surface antigen expression and consequently adhesive properties to E-selectin. Prefers type 1 chain over type 2 acceptors. Type 1 tetrasaccharide is a better acceptor than type 1 disaccharide suggesting that a beta anomeric configuration of GlcNAc in the substrate is preferred. Lewis-positive (Le(+)) individuals have an active enzyme while Lewis-negative (Le(-)) individuals have an inactive enzyme. This Pongo pygmaeus (Bornean orangutan) protein is 3-galactosyl-N-acetylglucosaminide 4-alpha-L-fucosyltransferase FUT3.